We begin with the raw amino-acid sequence, 443 residues long: Trigger factor (443 aa).

The region spanning 163 to 248 (GDTAVIDFEG…INEIKAKELP (86 aa)) is the PPIase FKBP-type domain.

It belongs to the FKBP-type PPIase family. Tig subfamily.

The protein resides in the cytoplasm. It catalyses the reaction [protein]-peptidylproline (omega=180) = [protein]-peptidylproline (omega=0). Its function is as follows. Involved in protein export. Acts as a chaperone by maintaining the newly synthesized protein in an open conformation. Functions as a peptidyl-prolyl cis-trans isomerase. The sequence is that of Trigger factor from Agathobacter rectalis (strain ATCC 33656 / DSM 3377 / JCM 17463 / KCTC 5835 / VPI 0990) (Eubacterium rectale).